The primary structure comprises 371 residues: MANIKHKLLIFLSFFCLLYLTSCQIHNEGEITIHKKEQKEIEIAILMPNQGPDAVVGKQYKDLIKMGLNDAVKSYIHVTSYDGSDEQNVLAAMDKIVARKTKIILGPLYSNFTSLITEKAKANDIIIITMSNNPALAEDKLFVFGHAPLKQLIRIINYYGDHHKDFMALLPQGKYSQTISQVMQNILIQKNSSLSHTEFYEDNPEAIEKAVRNISNNADIINERSDTTKPVIYLSDDPKNLNLLADSIRKYNLDKKAILIGDNRIDVDYSENIDISFTSTLNLFNSNVQDRAKDLGINHMGFMHLIAYDLGRMTANYIGNEFVSEIFLNRMHSRQPYIGLSGNIHFIDGVAQRRYDIIRKENGVYFTITED.

This is an uncharacterized protein from Rickettsia prowazekii (strain Madrid E).